We begin with the raw amino-acid sequence, 205 residues long: MDIHVWLAYLLTAVVFSLAPGSGTVNSISNGLSYGTRHSLGAIIGLQIGLACHIVLVGIGIGALVAQSALAFTLIKWIGAAYLVWLGIQKWRDRAPLTATTTSHELSQAALLRKAVLINLTNPKSIVFLVALFPQFIDPTRDHWPQFLVLGITTVTIDAIVMFGYTALAAQLGRYIRSPNIMTRMNKLFGSMFMGCGMLLATAKA.

Helical transmembrane passes span 5–25 (VWLA…SGTV), 41–61 (GAII…GIGI), 68–88 (SALA…WLGI), 117–137 (LINL…PQFI), and 147–167 (FLVL…GYTA).

This sequence belongs to the Rht family.

The protein resides in the cell inner membrane. Its function is as follows. Involved in positive regulation of motility and negative regulation of biofilm formation. This is an uncharacterized protein from Vibrio cholerae serotype O1 (strain ATCC 39315 / El Tor Inaba N16961).